The following is a 427-amino-acid chain: Serine hydroxymethyltransferase (427 aa).

(6S)-5,6,7,8-tetrahydrofolate-binding positions include Leu-118 and 122 to 124 (GHL). Lys-227 bears the N6-(pyridoxal phosphate)lysine mark. (6S)-5,6,7,8-tetrahydrofolate is bound by residues Glu-243 and 351 to 353 (SPF).

Belongs to the SHMT family. As to quaternary structure, homodimer. Pyridoxal 5'-phosphate serves as cofactor.

The protein resides in the cytoplasm. It carries out the reaction (6R)-5,10-methylene-5,6,7,8-tetrahydrofolate + glycine + H2O = (6S)-5,6,7,8-tetrahydrofolate + L-serine. It functions in the pathway one-carbon metabolism; tetrahydrofolate interconversion. Its pathway is amino-acid biosynthesis; glycine biosynthesis; glycine from L-serine: step 1/1. In terms of biological role, catalyzes the reversible interconversion of serine and glycine with tetrahydrofolate (THF) serving as the one-carbon carrier. This reaction serves as the major source of one-carbon groups required for the biosynthesis of purines, thymidylate, methionine, and other important biomolecules. Also exhibits THF-independent aldolase activity toward beta-hydroxyamino acids, producing glycine and aldehydes, via a retro-aldol mechanism. This chain is Serine hydroxymethyltransferase, found in Thermotoga neapolitana (strain ATCC 49049 / DSM 4359 / NBRC 107923 / NS-E).